A 156-amino-acid polypeptide reads, in one-letter code: 6,7-dimethyl-8-ribityllumazine synthase (156 aa).

Residues Phe23, 57-59, and 81-83 each bind 5-amino-6-(D-ribitylamino)uracil; these read SFE and AVI. Residue 86-87 coordinates (2S)-2-hydroxy-3-oxobutyl phosphate; sequence GT. His89 acts as the Proton donor in catalysis. Tyr114 serves as a coordination point for 5-amino-6-(D-ribitylamino)uracil. Arg128 contributes to the (2S)-2-hydroxy-3-oxobutyl phosphate binding site.

Belongs to the DMRL synthase family. In terms of assembly, forms an icosahedral capsid composed of 60 subunits, arranged as a dodecamer of pentamers.

It carries out the reaction (2S)-2-hydroxy-3-oxobutyl phosphate + 5-amino-6-(D-ribitylamino)uracil = 6,7-dimethyl-8-(1-D-ribityl)lumazine + phosphate + 2 H2O + H(+). It functions in the pathway cofactor biosynthesis; riboflavin biosynthesis; riboflavin from 2-hydroxy-3-oxobutyl phosphate and 5-amino-6-(D-ribitylamino)uracil: step 1/2. Its function is as follows. Catalyzes the formation of 6,7-dimethyl-8-ribityllumazine by condensation of 5-amino-6-(D-ribitylamino)uracil with 3,4-dihydroxy-2-butanone 4-phosphate. This is the penultimate step in the biosynthesis of riboflavin. In Halorhodospira halophila (strain DSM 244 / SL1) (Ectothiorhodospira halophila (strain DSM 244 / SL1)), this protein is 6,7-dimethyl-8-ribityllumazine synthase.